Here is a 74-residue protein sequence, read N- to C-terminus: Translation initiation factor IF-1, chloroplastic (74 aa).

The S1-like domain maps to 1–72 (MERQNLIEME…TKGRITYRLR (72 aa)).

It belongs to the IF-1 family. In terms of assembly, component of the 30S ribosomal translation pre-initiation complex which assembles on the 30S ribosome in the order IF-2 and IF-3, IF-1 and N-formylmethionyl-tRNA(fMet); mRNA recruitment can occur at any time during PIC assembly.

It localises to the plastid. Its subcellular location is the chloroplast. Functionally, one of the essential components for the initiation of protein synthesis. Stabilizes the binding of IF-2 and IF-3 on the 30S subunit to which N-formylmethionyl-tRNA(fMet) subsequently binds. Helps modulate mRNA selection, yielding the 30S pre-initiation complex (PIC). Upon addition of the 50S ribosomal subunit IF-1, IF-2 and IF-3 are released leaving the mature 70S translation initiation complex. In Mesostigma viride (Green alga), this protein is Translation initiation factor IF-1, chloroplastic.